Here is a 316-residue protein sequence, read N- to C-terminus: 4-hydroxy-3-methylbut-2-enyl diphosphate reductase (316 aa).

Position 12 (Cys12) interacts with [4Fe-4S] cluster. (2E)-4-hydroxy-3-methylbut-2-enyl diphosphate-binding residues include His41 and His74. 2 residues coordinate dimethylallyl diphosphate: His41 and His74. Positions 41 and 74 each coordinate isopentenyl diphosphate. Position 96 (Cys96) interacts with [4Fe-4S] cluster. His124 is a (2E)-4-hydroxy-3-methylbut-2-enyl diphosphate binding site. His124 provides a ligand contact to dimethylallyl diphosphate. His124 is a binding site for isopentenyl diphosphate. The active-site Proton donor is the Glu126. Thr167 contacts (2E)-4-hydroxy-3-methylbut-2-enyl diphosphate. Cys197 contributes to the [4Fe-4S] cluster binding site. 4 residues coordinate (2E)-4-hydroxy-3-methylbut-2-enyl diphosphate: Ser225, Ser226, Asn227, and Ser269. Dimethylallyl diphosphate contacts are provided by Ser225, Ser226, Asn227, and Ser269. Isopentenyl diphosphate-binding residues include Ser225, Ser226, Asn227, and Ser269.

The protein belongs to the IspH family. As to quaternary structure, homodimer. The cofactor is [4Fe-4S] cluster.

It carries out the reaction isopentenyl diphosphate + 2 oxidized [2Fe-2S]-[ferredoxin] + H2O = (2E)-4-hydroxy-3-methylbut-2-enyl diphosphate + 2 reduced [2Fe-2S]-[ferredoxin] + 2 H(+). The enzyme catalyses dimethylallyl diphosphate + 2 oxidized [2Fe-2S]-[ferredoxin] + H2O = (2E)-4-hydroxy-3-methylbut-2-enyl diphosphate + 2 reduced [2Fe-2S]-[ferredoxin] + 2 H(+). It functions in the pathway isoprenoid biosynthesis; dimethylallyl diphosphate biosynthesis; dimethylallyl diphosphate from (2E)-4-hydroxy-3-methylbutenyl diphosphate: step 1/1. Its pathway is isoprenoid biosynthesis; isopentenyl diphosphate biosynthesis via DXP pathway; isopentenyl diphosphate from 1-deoxy-D-xylulose 5-phosphate: step 6/6. Its function is as follows. Catalyzes the conversion of 1-hydroxy-2-methyl-2-(E)-butenyl 4-diphosphate (HMBPP) into a mixture of isopentenyl diphosphate (IPP) and dimethylallyl diphosphate (DMAPP). Acts in the terminal step of the DOXP/MEP pathway for isoprenoid precursor biosynthesis. In Escherichia coli O6:H1 (strain CFT073 / ATCC 700928 / UPEC), this protein is 4-hydroxy-3-methylbut-2-enyl diphosphate reductase.